Here is a 74-residue protein sequence, read N- to C-terminus: Large ribosomal subunit protein bL31 (74 aa).

Zn(2+) contacts are provided by Cys16, Cys18, Cys37, and Cys40.

This sequence belongs to the bacterial ribosomal protein bL31 family. Type A subfamily. Part of the 50S ribosomal subunit. Requires Zn(2+) as cofactor.

Binds the 23S rRNA. This chain is Large ribosomal subunit protein bL31, found in Nitrosomonas europaea (strain ATCC 19718 / CIP 103999 / KCTC 2705 / NBRC 14298).